A 100-amino-acid polypeptide reads, in one-letter code: Urease subunit gamma (100 aa).

It belongs to the urease gamma subunit family. As to quaternary structure, heterotrimer of UreA (gamma), UreB (beta) and UreC (alpha) subunits. Three heterotrimers associate to form the active enzyme. In terms of processing, although not discussed in the published references, Met-1 is represented in the submitted PDB entries as being modified by either a formyl, a carboxyl, or an acetyl group. The N-terminal is probably N-(dihydroxymethyl)methionine, the hydrated form of N-formylmethionine.

Its subcellular location is the cytoplasm. The catalysed reaction is urea + 2 H2O + H(+) = hydrogencarbonate + 2 NH4(+). The protein operates within nitrogen metabolism; urea degradation; CO(2) and NH(3) from urea (urease route): step 1/1. The sequence is that of Urease subunit gamma from Sporosarcina pasteurii (Bacillus pasteurii).